We begin with the raw amino-acid sequence, 157 residues long: Phosphopantetheine adenylyltransferase (157 aa).

Ser-9 contacts substrate. ATP contacts are provided by residues Ser-9–Phe-10 and His-17. Substrate contacts are provided by Lys-41, Leu-73, and Lys-87. Residues Gly-88–Arg-90, Glu-98, and Tyr-123–Ser-129 contribute to the ATP site.

The protein belongs to the bacterial CoaD family. As to quaternary structure, homohexamer. The cofactor is Mg(2+).

It localises to the cytoplasm. It catalyses the reaction (R)-4'-phosphopantetheine + ATP + H(+) = 3'-dephospho-CoA + diphosphate. Its pathway is cofactor biosynthesis; coenzyme A biosynthesis; CoA from (R)-pantothenate: step 4/5. In terms of biological role, reversibly transfers an adenylyl group from ATP to 4'-phosphopantetheine, yielding dephospho-CoA (dPCoA) and pyrophosphate. The chain is Phosphopantetheine adenylyltransferase from Alkaliphilus metalliredigens (strain QYMF).